The sequence spans 435 residues: Matrix remodeling-associated protein 8 (435 aa).

The signal sequence occupies residues 1–22 (MEIRCKVLVCHIILLHSATVYL). The Extracellular segment spans residues 23–337 (YSVPASQQNP…QESRLHFFQQ (315 aa)). 2 Ig-like V-type domains span residues 32–158 (PESV…LNIT) and 156–293 (NITK…LSVS). Residues asparagine 41, asparagine 120, asparagine 156, asparagine 245, and asparagine 324 are each glycosylated (N-linked (GlcNAc...) asparagine). Cysteine 54 and cysteine 138 form a disulfide bridge. An intrachain disulfide couples cysteine 187 to cysteine 273. The helical transmembrane segment at 338–358 (LGYILATLLLFILLLTAVILI) threads the bilayer. Residues 359-435 (TRKHQKRGYA…DLELRKEYCK (77 aa)) lie on the Cytoplasmic side of the membrane.

As to quaternary structure, homodimer in cis. Does not appear to form trans-homodimers.

The protein resides in the cell membrane. Transmembrane protein which can modulate activity of various signaling pathways, probably via binding to integrin ITGAV:ITGB3. Mediates heterophilic cell-cell interactions in vitro. This Xenopus laevis (African clawed frog) protein is Matrix remodeling-associated protein 8 (mxra8).